We begin with the raw amino-acid sequence, 377 residues long: Gap junction gamma-1 protein (377 aa).

Over 1–18 the chain is Cytoplasmic; that stretch reads MSWSFLTRLLEEINNHST. A helical transmembrane segment spans residues 19–39; the sequence is FVGKVWLTVLIIFRIVLTAVG. Residues 40–75 are Extracellular-facing; the sequence is GESIYYDEQSKFTCNTQQPGCENVCYDAFAPLSHVR. Residues 76–96 traverse the membrane as a helical segment; sequence FWVFQIILITTPSIMYLGFAM. The Cytoplasmic segment spans residues 97 to 174; the sequence is HRIARQPEMQ…RRIKQDGLMK (78 aa). The disordered stretch occupies residues 129–163; that stretch reads DYEEAEDNQEEDPMICEEEEPEKDSEKGDKKKHDG. The span at 131 to 151 shows a compositional bias: acidic residues; sequence EEAEDNQEEDPMICEEEEPEK. A helical membrane pass occupies residues 175–197; that stretch reads VYVLQLLFRSVFEVGFLMGQYIL. Residues 198–228 are Extracellular-facing; it reads YGFEVIPFFVCSRKPCPHTVDCFVSRPTEKT. A helical membrane pass occupies residues 229–249; the sequence is IFLLIMYAVSALCLFLNLCEL. Over 250–377 the chain is Cytoplasmic; that stretch reads FHLGIGGIRD…GVGNREKSGL (128 aa). Disordered regions lie at residues 265-294 and 334-377; these read KKELQESRKKTPSAPPNYHSVLKKGRLPNG and LNPT…KSGL. The span at 337 to 362 shows a compositional bias: polar residues; the sequence is TGDNTHASRSSSPESNSIAAEQNRLN.

Belongs to the connexin family. Gamma-type subfamily. In terms of assembly, a connexon is composed of a hexamer of connexins.

The protein resides in the cell membrane. It is found in the cell junction. Its subcellular location is the gap junction. One gap junction consists of a cluster of closely packed pairs of transmembrane channels, the connexons, through which materials of low MW diffuse from one cell to a neighboring cell. The sequence is that of Gap junction gamma-1 protein (gjc1) from Xenopus tropicalis (Western clawed frog).